The following is a 252-amino-acid chain: Chitooligosaccharide deacetylase (252 aa).

2 residues coordinate Mg(2+): His61 and His125.

It belongs to the YdjC deacetylase family. ChbG subfamily. In terms of assembly, homodimer. Requires Mg(2+) as cofactor.

The protein localises to the cytoplasm. The enzyme catalyses N,N'-diacetylchitobiose + H2O = N-acetyl-beta-D-glucosaminyl-(1-&gt;4)-D-glucosamine + acetate. It catalyses the reaction diacetylchitobiose-6'-phosphate + H2O = N'-monoacetylchitobiose-6'-phosphate + acetate. It participates in glycan degradation; chitin degradation. In terms of biological role, involved in the degradation of chitin. ChbG is essential for growth on the acetylated chitooligosaccharides chitobiose and chitotriose but is dispensable for growth on cellobiose and chitosan dimer, the deacetylated form of chitobiose. Deacetylation of chitobiose-6-P and chitotriose-6-P is necessary for both the activation of the chb promoter by the regulatory protein ChbR and the hydrolysis of phosphorylated beta-glucosides by the phospho-beta-glucosidase ChbF. Catalyzes the removal of only one acetyl group from chitobiose-6-P to yield monoacetylchitobiose-6-P, the inducer of ChbR and the substrate of ChbF. The sequence is that of Chitooligosaccharide deacetylase from Salmonella newport (strain SL254).